We begin with the raw amino-acid sequence, 176 residues long: Large ribosomal subunit protein bL12m (176 aa).

Belongs to the bacterial ribosomal protein bL12 family. As to quaternary structure, component of the mitochondrial large ribosomal subunit (mt-LSU). Mature N.crassa 74S mitochondrial ribosomes consist of a small (37S) and a large (54S) subunit. The 37S small subunit contains a 16S ribosomal RNA (16S mt-rRNA) and 32 different proteins. The 54S large subunit contains a 23S rRNA (23S mt-rRNA) and 42 different proteins.

The protein resides in the mitochondrion. In terms of biological role, component of the mitochondrial ribosome (mitoribosome), a dedicated translation machinery responsible for the synthesis of mitochondrial genome-encoded proteins, including at least some of the essential transmembrane subunits of the mitochondrial respiratory chain. The mitoribosomes are attached to the mitochondrial inner membrane and translation products are cotranslationally integrated into the membrane. This Neurospora crassa (strain ATCC 24698 / 74-OR23-1A / CBS 708.71 / DSM 1257 / FGSC 987) protein is Large ribosomal subunit protein bL12m (mrpl12).